The chain runs to 475 residues: Bifunctional protein HldE (475 aa).

A ribokinase region spans residues 1-317 (MQYSAQFNRA…ENAIHGRTTA (317 aa)). Position 194–197 (194–197 (NMSE)) interacts with ATP. Aspartate 263 is an active-site residue. Residues 343-475 (MTNGCFDILH…VIKKIQQLKE (133 aa)) are cytidylyltransferase.

In the N-terminal section; belongs to the carbohydrate kinase PfkB family. It in the C-terminal section; belongs to the cytidylyltransferase family. In terms of assembly, homodimer.

It catalyses the reaction D-glycero-beta-D-manno-heptose 7-phosphate + ATP = D-glycero-beta-D-manno-heptose 1,7-bisphosphate + ADP + H(+). The catalysed reaction is D-glycero-beta-D-manno-heptose 1-phosphate + ATP + H(+) = ADP-D-glycero-beta-D-manno-heptose + diphosphate. It participates in nucleotide-sugar biosynthesis; ADP-L-glycero-beta-D-manno-heptose biosynthesis; ADP-L-glycero-beta-D-manno-heptose from D-glycero-beta-D-manno-heptose 7-phosphate: step 1/4. The protein operates within nucleotide-sugar biosynthesis; ADP-L-glycero-beta-D-manno-heptose biosynthesis; ADP-L-glycero-beta-D-manno-heptose from D-glycero-beta-D-manno-heptose 7-phosphate: step 3/4. In terms of biological role, catalyzes the phosphorylation of D-glycero-D-manno-heptose 7-phosphate at the C-1 position to selectively form D-glycero-beta-D-manno-heptose-1,7-bisphosphate. Catalyzes the ADP transfer from ATP to D-glycero-beta-D-manno-heptose 1-phosphate, yielding ADP-D-glycero-beta-D-manno-heptose. This is Bifunctional protein HldE from Histophilus somni (strain 129Pt) (Haemophilus somnus).